We begin with the raw amino-acid sequence, 261 residues long: Glucose 1-dehydrogenase 2 (261 aa).

11-35 (VVTGGSKGLGRAMAVRFGQEQSKVV) contributes to the NADP(+) binding site. Position 145 (serine 145) interacts with substrate. Tyrosine 158 (proton acceptor) is an active-site residue.

The protein belongs to the short-chain dehydrogenases/reductases (SDR) family. Homotetramer.

It catalyses the reaction D-glucose + NAD(+) = D-glucono-1,5-lactone + NADH + H(+). The catalysed reaction is D-glucose + NADP(+) = D-glucono-1,5-lactone + NADPH + H(+). This is Glucose 1-dehydrogenase 2 (gdhII) from Priestia megaterium (Bacillus megaterium).